The primary structure comprises 215 residues: MKLVLMGLPGAGKGTQAEQIVEKYNIPHISTGDMFRAAMKNNTELGRKAKSFMDNGDLVPDEVTNGIVRERLSEDDAKDGFLLDGFPRTVEQAQELENILSDLGTELDAVINIDVEKDVLMKRLTGRWICRTCGKTYHEIYNPPKVAGKCDLDGGELYQRDDDKKETVEKRLNVNMKQTKPLLDFYSEKGKLHNINGEQDIKDVFVDVEKILTSF.

10–15 (GAGKGT) contacts ATP. An NMP region spans residues 30-59 (STGDMFRAAMKNNTELGRKAKSFMDNGDLV). AMP-binding positions include T31, R36, 57-59 (DLV), 85-88 (GFPR), and Q92. The tract at residues 126–163 (GRWICRTCGKTYHEIYNPPKVAGKCDLDGGELYQRDDD) is LID. R127 contacts ATP. Residues C130 and C133 each contribute to the Zn(2+) site. 136 to 137 (TY) provides a ligand contact to ATP. 2 residues coordinate Zn(2+): C150 and D153. Positions 160 and 171 each coordinate AMP. Q199 contributes to the ATP binding site.

This sequence belongs to the adenylate kinase family. Monomer.

It is found in the cytoplasm. The enzyme catalyses AMP + ATP = 2 ADP. It participates in purine metabolism; AMP biosynthesis via salvage pathway; AMP from ADP: step 1/1. Functionally, catalyzes the reversible transfer of the terminal phosphate group between ATP and AMP. Plays an important role in cellular energy homeostasis and in adenine nucleotide metabolism. The protein is Adenylate kinase of Listeria monocytogenes serotype 4a (strain HCC23).